A 336-amino-acid chain; its full sequence is MTEIQKPYDLKGRSLLKESDFTKAEFEGLIDFAITLKEYKKNGIKHHYLSGKNIALLFEKNSTRTRAAFTVASIDLGAHPEFLGKNDIQLGKKESVEDTAKVLGRMFDGIEFRGFSQQAVEDLAKFSGVPVWNGLTDDWHPTQMLADFMTIKENFGYLEGINLTYVGDGRNNIAHSLMVAGAMLGVNVRICTPKSLNPKEAYVDIAKEKASQYGGSVMITDNIAEAVENTDAIYTDVWVSMGEESEFEQRINLLKDYQVNQQMFDLTGKDSTIFLHCLPAFHDTNTLYGQEIYEKYGLAEMEVTDQIFRSEHSKVFDQAENRMHTIKAVMAATLGS.

Carbamoyl phosphate is bound by residues 62–65, glutamine 89, arginine 113, and 140–143; these read STRT and HPTQ. L-ornithine contacts are provided by residues asparagine 172, aspartate 236, and 240 to 241; that span reads SM. Residues 277-278 and arginine 322 each bind carbamoyl phosphate; that span reads CL.

The protein belongs to the aspartate/ornithine carbamoyltransferase superfamily. OTCase family.

It localises to the cytoplasm. The enzyme catalyses carbamoyl phosphate + L-ornithine = L-citrulline + phosphate + H(+). It functions in the pathway amino-acid degradation; L-arginine degradation via ADI pathway; carbamoyl phosphate from L-arginine: step 2/2. Reversibly catalyzes the transfer of the carbamoyl group from carbamoyl phosphate (CP) to the N(epsilon) atom of ornithine (ORN) to produce L-citrulline. This Staphylococcus aureus (strain MSSA476) protein is Ornithine carbamoyltransferase, catabolic.